A 563-amino-acid chain; its full sequence is Kelch repeat and BTB domain-containing protein 1 (563 aa).

The 68-residue stretch at 21-88 folds into the BTB domain; it reads CDINIVINDE…IYGIPLSLTN (68 aa). In terms of domain architecture, BACK spans 123–219; the sequence is CIDFYIYADK…SLLSPQVIKS (97 aa). 6 Kelch repeats span residues 252 to 297, 298 to 346, 347 to 395, 397 to 441, 442 to 492, and 494 to 540; these read IELI…VMDN, IIYM…VDDE, YIYC…MLNG, IYVI…VHAG, KIYI…SVHN, and LYVG…PIKH.

In terms of assembly, interacts (via BTB domain) with host CUL3.

The protein localises to the host cytoplasm. In terms of biological role, probable substrate-specific adapter of CUL3-containing E3 ubiquitin-protein ligases which mediate the ubiquitination and subsequent proteasomal degradation of host target proteins. The sequence is that of Kelch repeat and BTB domain-containing protein 1 (KBTB1) from Mus musculus (Mouse).